Consider the following 149-residue polypeptide: Large ribosomal subunit protein uL15 (149 aa).

The tract at residues 21-54 is disordered; the sequence is RGSASGLGCTSGKGNKGQNARSGGGVRPGFEGGQ. Composition is skewed to gly residues over residues 23–35 and 42–52; these read SASG…GKGN and SGGGVRPGFEG.

It belongs to the universal ribosomal protein uL15 family. In terms of assembly, part of the 50S ribosomal subunit.

Functionally, binds to the 23S rRNA. The sequence is that of Large ribosomal subunit protein uL15 from Lawsonia intracellularis (strain PHE/MN1-00).